A 262-amino-acid chain; its full sequence is 14-3-3 protein homolog (262 aa).

Belongs to the 14-3-3 family.

The chain is 14-3-3 protein homolog from Trichoderma harzianum (Hypocrea lixii).